Reading from the N-terminus, the 648-residue chain is Phosphatidylinositol-3,5-bisphosphate 3-phosphatase MTMR14 (648 aa).

Over residues 1-19 (MAGARAAAAASAGSTASSG) the composition is skewed to low complexity. A disordered region spans residues 1 to 27 (MAGARAAAAASAGSTASSGSPPPQEPG). Lys-193 is modified (N6-acetyllysine). N-linked (GlcNAc...) asparagine glycans are attached at residues Asn-225 and Asn-240. Cys-329 acts as the Phosphocysteine intermediate in catalysis. 5 residues coordinate a 1,2-diacyl-sn-glycero-3-phospho-(1D-myo-inositol-3,5-bisphosphate): Gly-332, Trp-333, Asp-334, Arg-335, and Arg-381. 5 residues coordinate a 1,2-diacyl-sn-glycero-3-phospho-(1D-myo-inositol-3-phosphate): Gly-332, Trp-333, Asp-334, Arg-335, and Arg-381. Residues 471 to 544 (PTQAAWRKSH…PRSVDHPLPG (74 aa)) form a disordered region. Over residues 494–506 (PSEERLPSHHGLT) the composition is skewed to basic and acidic residues. Ser-516 is subject to Phosphoserine. Asn-517 carries an N-linked (GlcNAc...) asparagine glycan. Ser-528, Ser-578, and Ser-622 each carry phosphoserine. Arg-636 carries the omega-N-methylarginine modification.

Belongs to the protein-tyrosine phosphatase family. Non-receptor class myotubularin subfamily.

It localises to the cytoplasm. The enzyme catalyses a 1,2-diacyl-sn-glycero-3-phospho-(1D-myo-inositol-3,5-bisphosphate) + H2O = a 1,2-diacyl-sn-glycero-3-phospho-(1D-myo-inositol-5-phosphate) + phosphate. It catalyses the reaction a 1,2-diacyl-sn-glycero-3-phospho-(1D-myo-inositol-3-phosphate) + H2O = a 1,2-diacyl-sn-glycero-3-phospho-(1D-myo-inositol) + phosphate. Lipid phosphatase that specifically dephosphorylates the D-3 position of phosphatidylinositol 3-phosphate and phosphatidylinositol 3,5-bisphosphate, generating phosphatidylinositol and phosphatidylinositol 5-phosphate. This Mus musculus (Mouse) protein is Phosphatidylinositol-3,5-bisphosphate 3-phosphatase MTMR14.